The following is a 371-amino-acid chain: RT1 class I histocompatibility antigen, AA alpha chain (371 aa).

A signal peptide spans 1–24; the sequence is MEAMAPRTLLLLLAAALAPTQTRA. The interval 25–114 is alpha-1; that stretch reads GSHSLRYFYT…LRGYYNQSEG (90 aa). Residues 25–311 lie on the Extracellular side of the membrane; sequence GSHSLRYFYT…PSTDSNMETT (287 aa). A glycan (N-linked (GlcNAc...) asparagine) is linked at asparagine 110. The tract at residues 115–206 is alpha-2; that stretch reads GSHTIQEMYG…ELGKETLLRS (92 aa). An alpha-3 region spans residues 207 to 298; the sequence is DPPEAHVTLH…GLPKPLSQRW (92 aa). In terms of domain architecture, Ig-like C1-type spans 209-295; the sequence is PEAHVTLHPR…EHEGLPKPLS (87 aa). A glycan (N-linked (GlcNAc...) asparagine) is linked at asparagine 280. The interval 299–311 is connecting peptide; that stretch reads EPSPSTDSNMETT. Residues 312–336 traverse the membrane as a helical segment; it reads VIYVILGAVAMIGAVAIIGAMVAVV. At 337–371 the chain is on the cytoplasmic side; sequence RRRKRNTGGKGGDYAPAPGRDSSQSSDVSLPDCKA. Residues 342-371 are disordered; sequence NTGGKGGDYAPAPGRDSSQSSDVSLPDCKA. Residues serine 362 and serine 365 each carry the phosphoserine modification.

It belongs to the MHC class I family. As to quaternary structure, heterodimer of an alpha chain and a beta chain (beta-2-microglobulin).

The protein resides in the membrane. In terms of biological role, involved in the presentation of foreign antigens to the immune system. This is RT1 class I histocompatibility antigen, AA alpha chain from Rattus norvegicus (Rat).